We begin with the raw amino-acid sequence, 177 residues long: Large ribosomal subunit protein uL6 (177 aa).

It belongs to the universal ribosomal protein uL6 family. Part of the 50S ribosomal subunit.

In terms of biological role, this protein binds to the 23S rRNA, and is important in its secondary structure. It is located near the subunit interface in the base of the L7/L12 stalk, and near the tRNA binding site of the peptidyltransferase center. In Histophilus somni (strain 129Pt) (Haemophilus somnus), this protein is Large ribosomal subunit protein uL6.